A 445-amino-acid polypeptide reads, in one-letter code: 3-phosphoshikimate 1-carboxyvinyltransferase (445 aa).

Positions 1-25 (MSGHGPAQPMTARRSGPLKGRAEIP) are disordered. Residues Lys-28, Ser-29, and Arg-33 each contribute to the 3-phosphoshikimate site. Lys-28 contributes to the phosphoenolpyruvate binding site. Phosphoenolpyruvate is bound by residues Gly-101 and Arg-129. The 3-phosphoshikimate site is built by Ser-174, Gln-176, Asp-326, and Lys-353. Gln-176 is a phosphoenolpyruvate binding site. Asp-326 serves as the catalytic Proton acceptor. Residues Arg-357 and Arg-400 each contribute to the phosphoenolpyruvate site.

This sequence belongs to the EPSP synthase family. As to quaternary structure, monomer.

It is found in the cytoplasm. The enzyme catalyses 3-phosphoshikimate + phosphoenolpyruvate = 5-O-(1-carboxyvinyl)-3-phosphoshikimate + phosphate. Its pathway is metabolic intermediate biosynthesis; chorismate biosynthesis; chorismate from D-erythrose 4-phosphate and phosphoenolpyruvate: step 6/7. Catalyzes the transfer of the enolpyruvyl moiety of phosphoenolpyruvate (PEP) to the 5-hydroxyl of shikimate-3-phosphate (S3P) to produce enolpyruvyl shikimate-3-phosphate and inorganic phosphate. In Cereibacter sphaeroides (strain ATCC 17029 / ATH 2.4.9) (Rhodobacter sphaeroides), this protein is 3-phosphoshikimate 1-carboxyvinyltransferase.